The primary structure comprises 706 residues: Phosphatase and actin regulator 4 (706 aa).

Residues 42-67 (EVLERKISMRKPREELVKRGLLVEVP) form an RPEL 1 repeat. Disordered regions lie at residues 65 to 123 (EVPE…QPCA), 196 to 380 (VHPR…HIPV), 385 to 404 (VPML…QSAS), and 459 to 579 (LKVP…REEW). Residues 106-121 (DSTGSRPKSGETTVQP) show a composition bias toward polar residues. Residues 200 to 211 (HLSEKNSEKYRP) show a composition bias toward basic and acidic residues. The span at 266-276 (DPSTRQQSSVP) shows a compositional bias: polar residues. A compositionally biased stretch (pro residues) spans 290–299 (KQPPVPPPKP). 3 stretches are compositionally biased toward acidic residues: residues 463–476 (DDDD…DESL), 508–523 (QEEE…DTDS), and 531–541 (EDDEEEEEEET). Over residues 563–579 (GPHDSNPEFPQRSREEW) the composition is skewed to basic and acidic residues. 2 RPEL repeats span residues 588–613 (SQLN…QKNE) and 625–650 (RRLT…RFNE).

It belongs to the phosphatase and actin regulator family. As to quaternary structure, binds ppp1ca and actin.

It is found in the cytoplasm. Its subcellular location is the cell projection. The protein localises to the lamellipodium. Functionally, regulator of protein phosphatase 1 (PP1) required for neural tube and optic fissure closure, and enteric neural crest cell (ENCCs) migration during development. Acts as an activator of PP1. During neural tube closure, localizes to the ventral neural tube and activates PP1, leading to down-regulate cell proliferation within cranial neural tissue and the neural retina. Also acts as a regulator of migration of enteric neural crest cells (ENCCs) by activating PP1, leading to repression of the integrin signaling through the rho/rock pathway. The protein is Phosphatase and actin regulator 4 (phactr4) of Xenopus tropicalis (Western clawed frog).